The primary structure comprises 463 residues: Dihydrolipoyllysine-residue succinyltransferase component of 2-oxoglutarate dehydrogenase complex, mitochondrial (463 aa).

One can recognise a Lipoyl-binding domain in the interval 73–148 (STSIEVPPMA…TVGEELAQVE (76 aa)). N6-lipoyllysine is present on K114. The tract at residues 144–237 (LAQVEPGEAP…FTPFPRTETR (94 aa)) is disordered. Low complexity predominate over residues 148 to 157 (EPGEAPAEGS). The segment covering 184-212 (TASKKEAAPKKEAAPKKEVTEPKKADQPK) has biased composition (basic and acidic residues). A run of 3 repeats spans residues 185-190 (ASKKEA), 191-196 (APKKEA), and 197-202 (APKKEV). Positions 185-209 (ASKKEAAPKKEAAPKKEVTEPKKAD) are 4 X 6 AA approximate tandem repeats of A-[SP]-K-K-E-[AV]. The 4; approximate repeat unit spans residues 204-209 (EPKKAD). T340 is modified (phosphothreonine). Active-site residues include H435 and D439.

The protein belongs to the 2-oxoacid dehydrogenase family. In terms of assembly, component of the 2-oxoglutarate dehydrogenase complex (OGDC), also called alpha-ketoglutarate dehydrogenase (KGDH) complex. The copmplex is composed of the catalytic subunits OGDH (2-oxoglutarate dehydrogenase KGD1; also called E1 subunit), DLST (dihydrolipoamide succinyltransferase KGD2; also called E2 subunit) and DLD (dihydrolipoamide dehydrogenase LPD1; also called E3 subunit), and the assembly factor KGD4. It depends on (R)-lipoate as a cofactor.

It localises to the mitochondrion. It carries out the reaction N(6)-[(R)-dihydrolipoyl]-L-lysyl-[protein] + succinyl-CoA = N(6)-[(R)-S(8)-succinyldihydrolipoyl]-L-lysyl-[protein] + CoA. It functions in the pathway amino-acid degradation; L-lysine degradation via saccharopine pathway; glutaryl-CoA from L-lysine: step 6/6. The 2-oxoglutarate dehydrogenase complex catalyzes the overall conversion of 2-oxoglutarate to succinyl-CoA and CO(2). It contains multiple copies of three enzymatic components: 2-oxoglutarate dehydrogenase (E1), dihydrolipoamide succinyltransferase (E2) and lipoamide dehydrogenase (E3). The protein is Dihydrolipoyllysine-residue succinyltransferase component of 2-oxoglutarate dehydrogenase complex, mitochondrial (KGD2) of Saccharomyces cerevisiae (strain ATCC 204508 / S288c) (Baker's yeast).